Consider the following 97-residue polypeptide: Putative septation protein SpoVG (97 aa).

This sequence belongs to the SpoVG family.

Its function is as follows. Essential for sporulation. Interferes with or is a negative regulator of the pathway leading to asymmetric septation. In Bacillus licheniformis (strain ATCC 14580 / DSM 13 / JCM 2505 / CCUG 7422 / NBRC 12200 / NCIMB 9375 / NCTC 10341 / NRRL NRS-1264 / Gibson 46), this protein is Putative septation protein SpoVG.